The sequence spans 364 residues: Chorismate synthase (364 aa).

Residues 41 to 60 form a disordered region; sequence MQHDLDRRRPGTSRYTTARR. NADP(+) is bound by residues R48 and R54. FMN-binding positions include 125-127, 238-239, G278, 293-297, and R319; these read RSS, NA, and KPTSS.

This sequence belongs to the chorismate synthase family. As to quaternary structure, homotetramer. FMNH2 serves as cofactor.

It carries out the reaction 5-O-(1-carboxyvinyl)-3-phosphoshikimate = chorismate + phosphate. The protein operates within metabolic intermediate biosynthesis; chorismate biosynthesis; chorismate from D-erythrose 4-phosphate and phosphoenolpyruvate: step 7/7. Functionally, catalyzes the anti-1,4-elimination of the C-3 phosphate and the C-6 proR hydrogen from 5-enolpyruvylshikimate-3-phosphate (EPSP) to yield chorismate, which is the branch point compound that serves as the starting substrate for the three terminal pathways of aromatic amino acid biosynthesis. This reaction introduces a second double bond into the aromatic ring system. In Shewanella baltica (strain OS185), this protein is Chorismate synthase.